Reading from the N-terminus, the 497-residue chain is MPFDPLLFAQNTVILPEIIVIVCLLIVLVLDLIQENSAWLSTISLTGLVAATIALVFQWNHPSANDFLGSIQVDNFTISFRGIITISSALSILISTEYIKRAGMGLAECLIFILTATVGGLFLCGANNLVTVFVSLECLSLSSYLLVGYAKKDVRSNEASMKYLLMGGASSSIIAYGFSWLYGLSGGEIELSKLVDGITNHIDEPIAVWVALACVVVGIGFKLSAFPFHQWTPDVYEGSPTPVVAFFSVGSKAAALALATRMLSIVFPSIESEWHVLLELLALLSMIFGNLIAATQTSMKRMLAYSSISQAGYLIIGIVCGNIYGYTGMITYMVTYIFMNLGAFGCVILFGLRTGTDQIRDYTGLYLKDPLLAFCLSVCLLSLAGIPPLAGFFGKLYLFWCGWKSGLYLLVYVALITSVISMYYYLRVVKSMFTRETKEQSSYVRNYLAPSLSLLPTTSIEVGIALCVFISTTLGFVINPIISATSETLLATNTIVG.

Helical transmembrane passes span 13 to 33 (VILP…LDLI), 37 to 57 (SAWL…ALVF), 76 to 96 (FTIS…LIST), 103 to 123 (GMGL…GLFL), 129 to 149 (LVTV…LVGY), 164 to 184 (LLMG…LYGL), 206 to 226 (IAVW…LSAF), 240 to 260 (PTPV…ALAT), 274 to 294 (WHVL…LIAA), 311 to 331 (AGYL…GMIT), 332 to 352 (YMVT…LFGL), 373 to 393 (AFCL…AGFF), 406 to 426 (GLYL…YYYL), and 462 to 482 (VGIA…NPII).

It belongs to the complex I subunit 2 family. In terms of assembly, NDH is composed of at least 16 different subunits, 5 of which are encoded in the nucleus.

It localises to the plastid. Its subcellular location is the chloroplast thylakoid membrane. The catalysed reaction is a plastoquinone + NADH + (n+1) H(+)(in) = a plastoquinol + NAD(+) + n H(+)(out). It catalyses the reaction a plastoquinone + NADPH + (n+1) H(+)(in) = a plastoquinol + NADP(+) + n H(+)(out). In terms of biological role, NDH shuttles electrons from NAD(P)H:plastoquinone, via FMN and iron-sulfur (Fe-S) centers, to quinones in the photosynthetic chain and possibly in a chloroplast respiratory chain. The immediate electron acceptor for the enzyme in this species is believed to be plastoquinone. Couples the redox reaction to proton translocation, and thus conserves the redox energy in a proton gradient. The polypeptide is NAD(P)H-quinone oxidoreductase subunit 2, chloroplastic (Zygnema circumcarinatum (Green alga)).